The following is a 309-amino-acid chain: Succinoglycan biosynthesis protein ExoM (309 aa).

This sequence belongs to the glycosyltransferase 2 family.

The protein resides in the cell inner membrane. It participates in glycan metabolism; exopolysaccharide biosynthesis. Its function is as follows. Glycosyltransferase required for the synthesis of succinoglycan (EPS I). Needed for the addition of the fourth sugar (glucose), catalyzes the formation of a beta-1,4 linkage between the third acetylated sugar and the fourth sugar. This is Succinoglycan biosynthesis protein ExoM (exoM) from Rhizobium meliloti (strain 1021) (Ensifer meliloti).